A 350-amino-acid chain; its full sequence is 3-dehydroquinate synthase (350 aa).

NAD(+)-binding positions include 63-68, 97-101, 121-122, Lys-134, Lys-143, and 161-164; these read DGEEYK, GVIGD, TT, and FLKT. The Zn(2+) site is built by Glu-176, His-235, and His-252.

The protein belongs to the sugar phosphate cyclases superfamily. Dehydroquinate synthase family. Co(2+) is required as a cofactor. Zn(2+) serves as cofactor. Requires NAD(+) as cofactor.

It localises to the cytoplasm. The enzyme catalyses 7-phospho-2-dehydro-3-deoxy-D-arabino-heptonate = 3-dehydroquinate + phosphate. It participates in metabolic intermediate biosynthesis; chorismate biosynthesis; chorismate from D-erythrose 4-phosphate and phosphoenolpyruvate: step 2/7. Its function is as follows. Catalyzes the conversion of 3-deoxy-D-arabino-heptulosonate 7-phosphate (DAHP) to dehydroquinate (DHQ). The chain is 3-dehydroquinate synthase from Sulfurovum sp. (strain NBC37-1).